A 948-amino-acid chain; its full sequence is Protocadherin alpha-2 (948 aa).

Positions 1–22 are cleaved as a signal peptide; the sequence is MASSIRRGLGAWTRLLSLLLLA. Topologically, residues 23–697 are extracellular; that stretch reads AWEVGSGQLR…GSEATLVDVN (675 aa). Cadherin domains are found at residues 30 to 133, 157 to 242, 243 to 350, 351 to 455, 456 to 565, and 588 to 678; these read QLRY…PPVF, ASDA…EPTF, AQSV…TPEV, SITS…APAF, AQPE…APAL, and GHVV…APKA. N-linked (GlcNAc...) asparagine glycans are attached at residues Asn257, Asn265, Asn362, and Asn548. Residues 698 to 718 traverse the membrane as a helical segment; sequence VYLIIAICAVSSLLVLTVLLY. Residues 719–948 are Cytoplasmic-facing; sequence TALRCSVPAT…GNSTTDNSDQ (230 aa). One copy of the PXXP 1 repeat lies at 734 to 737; the sequence is PGKP. The tract at residues 734–892 is 5 X 4 AA repeats of P-X-X-P; sequence PGKPTLVCSS…PDKFIIPGSP (159 aa). 3 disordered regions span residues 755 to 801, 829 to 854, and 868 to 948; these read RQRV…RQPN, GPGG…EVSP, and KYGP…NSDQ. The span at 783–795 shows a compositional bias: basic and acidic residues; that stretch reads AEEKQLSESEYVG. 4 PXXP repeats span residues 797-800, 830-833, 871-874, and 889-892; these read PRQP, PGGP, PGNP, and PGSP. Residues 907–921 are compositionally biased toward basic and acidic residues; sequence DKSDFITFGKKEETK.

Its subcellular location is the cell membrane. Its function is as follows. Potential calcium-dependent cell-adhesion protein. May be involved in the establishment and maintenance of specific neuronal connections in the brain. In Pan troglodytes (Chimpanzee), this protein is Protocadherin alpha-2 (PCDHA2).